We begin with the raw amino-acid sequence, 432 residues long: Alpha-ketoglutarate permease (432 aa).

At 1–32 the chain is on the cytoplasmic side; sequence MAESTVTADSKLTSSDTRRRIWAIVGASSGNL. The chain crosses the membrane as a helical span at residues 33-53; sequence VEWFDFYVYSFCSLYFAHIFF. Residues 54 to 62 are Periplasmic-facing; it reads PSGNTTTQL. The helical transmembrane segment at 63-83 threads the bilayer; sequence LQTAGVFAAGFLMRPIGGWLF. Residues 84–95 lie on the Cytoplasmic side of the membrane; sequence GRIADKHGRKKS. A helical membrane pass occupies residues 96–116; sequence MLLSVCMMCFGSLVIACLPGY. Residues 117–118 are Periplasmic-facing; it reads ET. The helical transmembrane segment at 119–139 threads the bilayer; sequence IGTWAPALLLLARLFQGLSVG. The Cytoplasmic portion of the chain corresponds to 140 to 162; it reads GEYGTSATYMSEVAVEGRKGFYA. A helical membrane pass occupies residues 163–183; sequence SFQYVTLIGGQLLALLVVVVL. Topologically, residues 184–193 are periplasmic; sequence QHTMEDAALR. The chain crosses the membrane as a helical span at residues 194 to 214; that stretch reads EWGWRIPFALGAVLAVVALWL. The Cytoplasmic segment spans residues 215–243; that stretch reads RRQLDETSQQETRALKEAGSLKGLWRNRR. A helical membrane pass occupies residues 244-264; sequence AFIMVLGFTAAGSLCFYTFTT. Topologically, residues 265–279 are periplasmic; sequence YMQKYLVNTAGMHAN. Residues 280–300 traverse the membrane as a helical segment; sequence VASGIMTAALFVFMLIQPLIG. At 301-309 the chain is on the cytoplasmic side; the sequence is ALSDKIGRR. The helical transmembrane segment at 310 to 330 threads the bilayer; it reads TSMLCFGSLAAIFTVPILSAL. Over 331–339 the chain is Periplasmic; sequence QNVSSPYAA. The helical transmembrane segment at 340-360 threads the bilayer; that stretch reads FGLVMCALLIVSFYTSISGIL. Topologically, residues 361–373 are cytoplasmic; it reads KAEMFPAQVRALG. Residues 374-394 traverse the membrane as a helical segment; that stretch reads VGLSYAVANAIFGGSAEYVAL. Residues 395–402 are Periplasmic-facing; that stretch reads SLKSIGME. The chain crosses the membrane as a helical span at residues 403 to 423; that stretch reads TAFFWYVTLMAVVAFLVSLML. Residues 424–432 lie on the Cytoplasmic side of the membrane; it reads HRKGKGMRL.

It belongs to the major facilitator superfamily. Metabolite:H+ Symporter (MHS) family (TC 2.A.1.6) family.

Its subcellular location is the cell inner membrane. In terms of biological role, uptake of alpha-ketoglutarate across the boundary membrane with the concomitant import of a cation (symport system). The chain is Alpha-ketoglutarate permease (kgtP) from Escherichia coli (strain K12).